The sequence spans 390 residues: 4-O-beta-D-mannosyl-D-glucose phosphorylase (390 aa).

This sequence belongs to the glycosyl hydrolase 130 family.

The enzyme catalyses 4-O-beta-D-mannopyranosyl-D-glucopyranose + phosphate = alpha-D-mannose 1-phosphate + D-glucose. Its function is as follows. Converts 4-O-beta-D-mannopyranosyl-D-glucopyranose (Man-Glc) to mannose 1-phosphate (Man1P) and glucose. Involved in a mannan catabolic pathway which feeds into glycolysis. This Bacteroides fragilis (strain ATCC 25285 / DSM 2151 / CCUG 4856 / JCM 11019 / LMG 10263 / NCTC 9343 / Onslow / VPI 2553 / EN-2) protein is 4-O-beta-D-mannosyl-D-glucose phosphorylase.